A 462-amino-acid polypeptide reads, in one-letter code: tRNA-2-methylthio-N(6)-dimethylallyladenosine synthase (462 aa).

The MTTase N-terminal domain maps to 28–144 (KKLFVKTYGC…LPKMMEAVNA (117 aa)). [4Fe-4S] cluster-binding residues include Cys37, Cys73, Cys107, Cys181, Cys185, and Cys188. In terms of domain architecture, Radical SAM core spans 167–398 (ATRGPTAFLT…QALLTQQQRA (232 aa)). Residues 401–462 (DAMVGRRVKV…KTNSLTGRLV (62 aa)) form the TRAM domain.

The protein belongs to the methylthiotransferase family. MiaB subfamily. Monomer. The cofactor is [4Fe-4S] cluster.

The protein resides in the cytoplasm. It carries out the reaction N(6)-dimethylallyladenosine(37) in tRNA + (sulfur carrier)-SH + AH2 + 2 S-adenosyl-L-methionine = 2-methylsulfanyl-N(6)-dimethylallyladenosine(37) in tRNA + (sulfur carrier)-H + 5'-deoxyadenosine + L-methionine + A + S-adenosyl-L-homocysteine + 2 H(+). In terms of biological role, catalyzes the methylthiolation of N6-(dimethylallyl)adenosine (i(6)A), leading to the formation of 2-methylthio-N6-(dimethylallyl)adenosine (ms(2)i(6)A) at position 37 in tRNAs that read codons beginning with uridine. In Jannaschia sp. (strain CCS1), this protein is tRNA-2-methylthio-N(6)-dimethylallyladenosine synthase.